The chain runs to 869 residues: Histone deacetylase 4 (869 aa).

3 disordered regions span residues 1 to 25 (MEEA…PSTS), 128 to 167 (SSSN…TISQ), and 180 to 218 (RSKG…QVNV). The span at 184-202 (ESNSQSNLMSNSVTANGNG) shows a compositional bias: polar residues. Position 251 is a phosphoserine (S251). The histone deacetylase stretch occupies residues 460–802 (CTTGLGYDQA…VQALIGESDD (343 aa)). The active site involves H608.

This sequence belongs to the histone deacetylase family. HD type 2 subfamily. Interacts with mef-2. Post-translationally, phosphorylated by serine/threonine-protein kinase kin-29 at Ser-251; the phosphorylation inhibits repression of transcription by mef-2. May be phosphorylated by either cyclic-AMP dependent or cyclic-GMP dependent protein kinases. As to expression, expressed in body-wall muscle cells, hypodermal seam cells and neuronal cells including sensory amphid neuronal processes, the nerve ring, ventral nerve cords and motor neuronal commissures.

The protein resides in the nucleus. The catalysed reaction is N(6)-acetyl-L-lysyl-[histone] + H2O = L-lysyl-[histone] + acetate. In terms of biological role, responsible for the deacetylation of lysine residues on the N-terminal part of the core histones (H2A, H2B, H3 and H4). Histone deacetylation gives a tag for epigenetic repression and plays an important role in transcriptional regulation, cell cycle progression and developmental events. Histone deacetylases act via the formation of large multiprotein complexes. Involved in transduction of sensory signals, together with egl-4, kin-29 and mef-2; binding to transcription factor mef-2 enables negative modulation of chemoreceptor gene expression in chemosensory neurons. May be involved in muscle development. In Caenorhabditis elegans, this protein is Histone deacetylase 4 (hda-4).